Here is a 308-residue protein sequence, read N- to C-terminus: Putative S-adenosyl-L-methionine-dependent methyltransferase MAB_4585c (308 aa).

S-adenosyl-L-methionine-binding positions include D131 and 160–161 (DL).

It belongs to the UPF0677 family.

Functionally, exhibits S-adenosyl-L-methionine-dependent methyltransferase activity. The protein is Putative S-adenosyl-L-methionine-dependent methyltransferase MAB_4585c of Mycobacteroides abscessus (strain ATCC 19977 / DSM 44196 / CCUG 20993 / CIP 104536 / JCM 13569 / NCTC 13031 / TMC 1543 / L948) (Mycobacterium abscessus).